The following is a 384-amino-acid chain: Succinyl-diaminopimelate desuccinylase (384 aa).

H75 is a Zn(2+) binding site. D77 is a catalytic residue. Zn(2+) is bound at residue D108. Residue E142 is the Proton acceptor of the active site. Zn(2+)-binding residues include E143, E171, and H357.

It belongs to the peptidase M20A family. DapE subfamily. As to quaternary structure, homodimer. Zn(2+) is required as a cofactor. Co(2+) serves as cofactor.

It catalyses the reaction N-succinyl-(2S,6S)-2,6-diaminopimelate + H2O = (2S,6S)-2,6-diaminopimelate + succinate. Its pathway is amino-acid biosynthesis; L-lysine biosynthesis via DAP pathway; LL-2,6-diaminopimelate from (S)-tetrahydrodipicolinate (succinylase route): step 3/3. Catalyzes the hydrolysis of N-succinyl-L,L-diaminopimelic acid (SDAP), forming succinate and LL-2,6-diaminopimelate (DAP), an intermediate involved in the bacterial biosynthesis of lysine and meso-diaminopimelic acid, an essential component of bacterial cell walls. The polypeptide is Succinyl-diaminopimelate desuccinylase (Shewanella oneidensis (strain ATCC 700550 / JCM 31522 / CIP 106686 / LMG 19005 / NCIMB 14063 / MR-1)).